Reading from the N-terminus, the 780-residue chain is Zinc finger and SCAN domain-containing protein 10 (780 aa).

Positions 1 to 38 (MLGESVPAAVEQEQLGEVKLEEEEAVSPEDPRRPESRL) are disordered. The span at 29 to 38 (EDPRRPESRL) shows a compositional bias: basic and acidic residues. Residues 56 to 126 (MGPRASLSRL…LLLEGIHREP (71 aa)) enclose the SCAN box domain. Disordered regions lie at residues 153-237 (GCAS…SRDQ) and 255-324 (KAWP…GSLL). Residues serine 162 and serine 208 each carry the phosphoserine modification. The span at 202-224 (SSKQPLSPGPQKTFQALQESSPQ) shows a compositional bias: polar residues. At threonine 268 the chain carries Phosphothreonine. Over residues 268-280 (TPDKEEFKQEEPK) the composition is skewed to basic and acidic residues. 14 C2H2-type zinc fingers span residues 347 to 370 (FICADCGVSFPQLSRLKAHQLRSH), 376 to 398 (FLCLCCGKSFGRSSILKLHMRTH), 404 to 426 (HACHLCGHRFRQSSHLSKHLLTH), 432 to 454 (FLCAECGRGFQRRASLVQHLLAH), 476 to 498 (VLCSHCGQSFQRRSSLKRHLRIH), 522 to 544 (FVCSDCGKAFRRSEHLVAHRRVH), 550 to 572 (FSCQACGRSFTQSSQLVSHQRVH), 578 to 600 (YACPQCGKRFVRRASLARHLLTH), 606 to 628 (HHCTQCGKSFGQTQDLARHQRSH), 634 to 656 (CRCSECGEGFSQSAHLARHQRIH), 662 to 684 (HACDTCGHRFRNSSNLARHRRSH), 690 to 712 (YSCQTCGRSFRRNAHLRRHLATH), 724 to 746 (QECVECGKSFSRSCNLLRHLLVH), and 752 to 774 (YSCTQCGRSFSRNSHLLRHLRTH). At glutamine 483 the chain carries N5-methylglutamine. Positions 492–520 (KRHLRIHARDKDRRSSEGSGSRRRDSDRR) are disordered. The span at 498–520 (HARDKDRRSSEGSGSRRRDSDRR) shows a compositional bias: basic and acidic residues.

In terms of assembly, interacts with POU5F1/OCT4 and SOX2. In terms of processing, methylated at Gln-483 by N6AMT1.

It localises to the nucleus. In terms of biological role, embryonic stem (ES) cell-specific transcription factor required to maintain ES cell pluripotency. Can both activate and /or repress expression of target genes, depending on the context. Specifically binds the 5'-[GA]CGCNNGCG[CT]-3' DNA consensus sequence. Regulates expression of POU5F1/OCT4, ZSCAN4 and ALYREF/THOC4. The sequence is that of Zinc finger and SCAN domain-containing protein 10 (ZSCAN10) from Homo sapiens (Human).